The primary structure comprises 216 residues: GTP:AMP phosphotransferase, mitochondrial (216 aa).

A GTP-binding site is contributed by 15–20 (GSGKGT). Residues 35-64 (STGDILRQNIIKNTELGKKAKQYIAEGKLV) form an NMPbind region. AMP-binding positions include T36, R41, 62–64 (KLV), 89–92 (GFPR), and Q96. Residues 125–162 (NRWIHAPSGRVYNIGFKNPKVPGKDDVTGEPLMQREDD) are LID. GTP contacts are provided by residues R126 and 135–136 (VY). Residues R159 and R170 each contribute to the AMP site. Residue T199 participates in GTP binding.

Belongs to the adenylate kinase family. AK3 subfamily. In terms of assembly, monomer. In terms of tissue distribution, ubiquitously expressed with highest levels expressed in the abdomen, suggesting a function in muscle tissues.

It localises to the mitochondrion matrix. The enzyme catalyses a ribonucleoside 5'-triphosphate + AMP = a ribonucleoside 5'-diphosphate + ADP. Involved in maintaining the homeostasis of cellular nucleotides by catalyzing the interconversion of nucleoside phosphates. Has GTP:AMP phosphotransferase and ITP:AMP phosphotransferase activities. This Drosophila melanogaster (Fruit fly) protein is GTP:AMP phosphotransferase, mitochondrial.